The primary structure comprises 295 residues: Bifunctional protein FolD (295 aa).

Residues 166 to 168 (GRS), S195, and I236 each bind NADP(+).

The protein belongs to the tetrahydrofolate dehydrogenase/cyclohydrolase family. In terms of assembly, homodimer.

It carries out the reaction (6R)-5,10-methylene-5,6,7,8-tetrahydrofolate + NADP(+) = (6R)-5,10-methenyltetrahydrofolate + NADPH. The catalysed reaction is (6R)-5,10-methenyltetrahydrofolate + H2O = (6R)-10-formyltetrahydrofolate + H(+). It functions in the pathway one-carbon metabolism; tetrahydrofolate interconversion. Functionally, catalyzes the oxidation of 5,10-methylenetetrahydrofolate to 5,10-methenyltetrahydrofolate and then the hydrolysis of 5,10-methenyltetrahydrofolate to 10-formyltetrahydrofolate. This is Bifunctional protein FolD from Chlorobium phaeobacteroides (strain DSM 266 / SMG 266 / 2430).